A 1096-amino-acid chain; its full sequence is Cation-transporting ATPase 5 (1096 aa).

At 1–19 (MDSIELKQLVPENDSEPGT) the chain is on the cytoplasmic side. A helical transmembrane segment spans residues 20–41 (PRQLLFQHYDISNEETIGIKPF). At 42–47 (KSIPAK) the chain is on the lumenal side. Residues 48-70 (VYILRVTEILTLGLLHLILTWLP) traverse the membrane as a helical segment. At 71–193 (EFRLKWIEAP…LVSTKKSIVT (123 aa)) the chain is on the cytoplasmic side. The helical transmembrane segment at 194-216 (ILLNEVLHPFYLFQAVSVLIWLC) threads the bilayer. Residues 217–220 (DSFV) are Lumenal-facing. A helical membrane pass occupies residues 221-238 (FYSCCIVFISSYSIFLSV). The Cytoplasmic portion of the chain corresponds to 239 to 391 (KESKESENRI…NLRPSQLYLD (153 aa)). The chain crosses the membrane as a helical span at residues 392-412 (SMSFLKTMAILSFVSIVFIAI). The Lumenal segment spans residues 413–425 (YLNLYNASFGHVV). Residues 426 to 447 (LRSLDVLTILVPPALPATLSVG) traverse the membrane as a helical segment. Over 448–895 (IANSIARLSR…SLILSHRCFQ (448 aa)) the chain is Cytoplasmic. The active-site 4-aspartylphosphate intermediate is Asp-480. Mg(2+)-binding residues include Asp-838 and Asp-842. Residues 896–915 (YMVLCAIVQFSGVFFLYLKN) form a helical membrane-spanning segment. The Lumenal segment spans residues 916 to 922 (YNFNDNQ). The helical transmembrane segment at 923 to 940 (FLFMDLLIIFPLSAAMSY) threads the bilayer. The Cytoplasmic segment spans residues 941 to 958 (FDPAQNLTSNRPNSTLFG). Residues 959-982 (KGRVKDLGIQSVLIWLSHGLLTLI) traverse the membrane as a helical segment. Over 983 to 1003 (LHELNWVELPEWQLEKSNTKN) the chain is Lumenal. Residues 1004–1026 (VLVTSIFLLSSLQYLGICIGINQ) traverse the membrane as a helical segment. At 1027 to 1040 (SSEFLSPIWKKKTY) the chain is on the cytoplasmic side. A helical transmembrane segment spans residues 1041–1060 (VCLCTTIGLCNIYLCFANEN). The Lumenal portion of the chain corresponds to 1061–1075 (HIISRCLQITRLPTL). The helical transmembrane segment at 1076–1096 (YRFIILFMGVISCCLTSILNM) threads the bilayer.

The protein belongs to the cation transport ATPase (P-type) (TC 3.A.3) family. Type V subfamily.

Its subcellular location is the endoplasmic reticulum membrane. It is found in the golgi apparatus membrane. The catalysed reaction is ATP + H2O = ADP + phosphate + H(+). In terms of biological role, plays a role in regulating calcium and manganese homeostasis responsible for cell cycle progression. The chain is Cation-transporting ATPase 5 (cta5) from Schizosaccharomyces pombe (strain 972 / ATCC 24843) (Fission yeast).